We begin with the raw amino-acid sequence, 404 residues long: Transcriptional repressor OPI1 (404 aa).

Ser10 carries the phosphoserine modification. Residues 25–51 (QSCRQKSQPSEDVSQADKMPASESSTT) form a disordered region. The segment covering 26-37 (SCRQKSQPSEDV) has biased composition (polar residues). Residues 109 to 138 (KRQKLSRAIAKGKDNLKEYKLNMSIESKKR) are basic motif. The interval 139–160 (LVTCLHLLKLANKQLSDKISCL) is leucine-zipper. 3 disordered regions span residues 170–201 (HPLHKQDGNARTTTGAGEDETSSDEDDDDEEF), 305–327 (LQQQQQKRNKDGDDSASPSSSVT), and 378–404 (QQQQYRQQQQKDGNYVKPSQDNVDSKD). A compositionally biased stretch (acidic residues) spans 186–201 (GEDETSSDEDDDDEEF). Positions 200–206 (EFFDASE) match the FFAT motif. The segment covering 378-387 (QQQQYRQQQQ) has biased composition (low complexity). Positions 394 to 404 (KPSQDNVDSKD) are enriched in polar residues.

Interacts with SCS2.

It localises to the endoplasmic reticulum. It is found in the nucleus. In terms of biological role, negative regulator of the transcriptional complex INO2-INO4 in response to phospholipid precursor availability. When precursors become limiting, OPI1 is retained at the endoplasmic reticulum (ER) and INO2-INO4 activates INO1 and other genes required for phospholipid biosynthesis, whereas abundant precursor availability results in targeting of OPI1 to the nucleus to repress transcription of these genes. Binds directly to phosphatidic acid, which is required for ER targeting and may act as sensing mechanism for precursor availability, as phosphatidic acid becomes rapidly depleted upon phospholipid biosynthesis. The sequence is that of Transcriptional repressor OPI1 (OPI1) from Saccharomyces cerevisiae (strain ATCC 204508 / S288c) (Baker's yeast).